Reading from the N-terminus, the 125-residue chain is Glycine cleavage system H protein (125 aa).

The Lipoyl-binding domain occupies 19-101 (IATIGITDYA…MGDGWFIKLR (83 aa)). The residue at position 60 (lysine 60) is an N6-lipoyllysine.

It belongs to the GcvH family. As to quaternary structure, the glycine cleavage system is composed of four proteins: P, T, L and H. The cofactor is (R)-lipoate.

Functionally, the glycine cleavage system catalyzes the degradation of glycine. The H protein shuttles the methylamine group of glycine from the P protein to the T protein. The protein is Glycine cleavage system H protein of Parvibaculum lavamentivorans (strain DS-1 / DSM 13023 / NCIMB 13966).